The sequence spans 143 residues: Transcriptional regulator MraZ (143 aa).

SpoVT-AbrB domains are found at residues E5–E47 and A76–I119.

Belongs to the MraZ family. As to quaternary structure, forms oligomers.

It is found in the cytoplasm. It localises to the nucleoid. The sequence is that of Transcriptional regulator MraZ from Bacillus subtilis (strain 168).